We begin with the raw amino-acid sequence, 222 residues long: Ras-related protein Rab-21 (222 aa).

Ala-2 is subject to N-acetylalanine. Residues Gly-26, Gly-29, Lys-30, Thr-31, Ser-32, Asn-43, Asp-44, His-46, Thr-48, and Thr-49 each coordinate GTP. Mg(2+) is bound at residue Thr-31. The Switch 1 signature appears at 41-54 (KFNDKHITTLQASF). Mg(2+)-binding residues include Thr-49 and Asp-72. Positions 74–92 (AGQERFHALGPIYYRDSNG) match the Switch 2 motif. The GTP site is built by Gly-75, Asn-130, Lys-131, Asp-133, Ala-161, and Lys-162. S-geranylgeranyl cysteine attachment occurs at residues Cys-218 and Cys-219. Cys-219 carries the post-translational modification Cysteine methyl ester. The propeptide at 220 to 222 (SSG) is removed in mature form.

Belongs to the small GTPase superfamily. Rab family. As to quaternary structure, interacts with the cytoplasmic tail of integrins ITGA1, ITGA2, ITGA5, ITGA6, ITGA11 and ITGB1; this interaction is dependent upon its GDP/GTP cycle. Interacts with RABGEF1 (via VPS9 domain). Interacts with ANKRD27. Interacts with VAMP7. Interacts (in GTP-bound form) with VAMP8 in response to starvation; the interaction probably regulates VAMP8 endolysosomal trafficking. Interacts (active GTP-bound form) with TMED10; the interaction is indirect and regulates TMED10 abundance and localization at the Golgi. Mg(2+) serves as cofactor.

The protein resides in the endoplasmic reticulum membrane. It localises to the golgi apparatus. It is found in the trans-Golgi network. Its subcellular location is the golgi apparatus membrane. The protein localises to the early endosome membrane. The protein resides in the cytoplasmic vesicle membrane. It localises to the cleavage furrow. It is found in the cell projection. Its subcellular location is the neuron projection. The catalysed reaction is GTP + H2O = GDP + phosphate + H(+). With respect to regulation, regulated by guanine nucleotide exchange factors (GEFs) including ANKRD27 and RABGEF1, which promote the exchange of bound GDP for free GTP. Regulated by GTPase activating proteins (GAPs) which increase the GTP hydrolysis activity. Inhibited by GDP dissociation inhibitors (GDIs). Functionally, the small GTPases Rab are key regulators of intracellular membrane trafficking, from the formation of transport vesicles to their fusion with membranes. Rabs cycle between an inactive GDP-bound form and an active GTP-bound form that is able to recruit to membranes different sets of downstream effectors directly responsible for vesicle formation, movement, tethering and fusion. RAB21 is involved in membrane trafficking control. Regulates integrin internalization and recycling, but does not influence the traffic of endosomally translocated receptors in general. As a result, may regulate cell adhesion and migration. During the mitosis of adherent cells, controls the endosomal trafficking of integrins which is required for the successful completion of cytokinesis. Involved in neurite growth. Following SBF2/MTMT13-mediated activation in response to starvation-induced autophagy, binds to and regulates SNARE protein VAMP8 endolysosomal transport required for SNARE-mediated autophagosome-lysosome fusion. Modulates protein levels of the cargo receptors TMED2 and TMED10, and required for appropriate Golgi localization of TMED10. The sequence is that of Ras-related protein Rab-21 from Mus musculus (Mouse).